Here is a 125-residue protein sequence, read N- to C-terminus: Holo-[acyl-carrier-protein] synthase (125 aa).

Mg(2+) is bound by residues Asp7 and Glu56.

The protein belongs to the P-Pant transferase superfamily. AcpS family. Requires Mg(2+) as cofactor.

The protein localises to the cytoplasm. The catalysed reaction is apo-[ACP] + CoA = holo-[ACP] + adenosine 3',5'-bisphosphate + H(+). Transfers the 4'-phosphopantetheine moiety from coenzyme A to a Ser of acyl-carrier-protein. In Chlamydia muridarum (strain MoPn / Nigg), this protein is Holo-[acyl-carrier-protein] synthase.